Consider the following 130-residue polypeptide: Endoglucanase 2 (130 aa).

Residues His-47, Asp-98, and Glu-107 contribute to the active site.

It belongs to the glycosyl hydrolase 9 (cellulase E) family.

It carries out the reaction Endohydrolysis of (1-&gt;4)-beta-D-glucosidic linkages in cellulose, lichenin and cereal beta-D-glucans.. Involved in ripening fruit process. This chain is Endoglucanase 2 (CEL2), found in Persea americana (Avocado).